A 117-amino-acid polypeptide reads, in one-letter code: Large ribosomal subunit protein uL24 (117 aa).

The protein belongs to the universal ribosomal protein uL24 family. Part of the 50S ribosomal subunit.

One of two assembly initiator proteins, it binds directly to the 5'-end of the 23S rRNA, where it nucleates assembly of the 50S subunit. Functionally, one of the proteins that surrounds the polypeptide exit tunnel on the outside of the subunit. This Nostoc punctiforme (strain ATCC 29133 / PCC 73102) protein is Large ribosomal subunit protein uL24.